The sequence spans 298 residues: MKDKFGREIRSLRISITNKCNLQCFYCHREGHDSNNDRYMTPEEIGIIAKTSTKFGVKKIKISGGEPLLRKDVCEIIENIKDERIKDISLTTNGILLENLAEKLKDAGLNRVNVSLDTLNPELYKKITKFGDVERVINGIKKAIDVSLTPLKVNFLAMSINIKDLPDIMEFCRDIGAILQIIEFIPLKEELKGYYYNISPIENEIKEKADKVITRNFMQNRKKYIVDGLEIEFVRPMDNSEFCMHCTRIRLTYDGYLKPCLLRDDNLVDVLTPLRKGENLEPYFIECINRREPYFKIK.

The Radical SAM core domain maps to 4–230 (KFGREIRSLR…RKKYIVDGLE (227 aa)). Arg-13 provides a ligand contact to GTP. [4Fe-4S] cluster is bound by residues Cys-20 and Cys-24. S-adenosyl-L-methionine is bound at residue Tyr-26. Cys-27 contributes to the [4Fe-4S] cluster binding site. Lys-61 provides a ligand contact to GTP. Gly-65 is a binding site for S-adenosyl-L-methionine. Thr-91 serves as a coordination point for GTP. Ser-115 is an S-adenosyl-L-methionine binding site. A GTP-binding site is contributed by Lys-152. The [4Fe-4S] cluster site is built by Cys-243 and Cys-246. 248–250 (RIR) contributes to the GTP binding site. Cys-260 is a binding site for [4Fe-4S] cluster.

Belongs to the radical SAM superfamily. MoaA family. [4Fe-4S] cluster is required as a cofactor.

It catalyses the reaction GTP + AH2 + S-adenosyl-L-methionine = (8S)-3',8-cyclo-7,8-dihydroguanosine 5'-triphosphate + 5'-deoxyadenosine + L-methionine + A + H(+). Its pathway is cofactor biosynthesis; molybdopterin biosynthesis. Functionally, catalyzes the cyclization of GTP to (8S)-3',8-cyclo-7,8-dihydroguanosine 5'-triphosphate. The sequence is that of Probable GTP 3',8-cyclase from Methanocaldococcus jannaschii (strain ATCC 43067 / DSM 2661 / JAL-1 / JCM 10045 / NBRC 100440) (Methanococcus jannaschii).